The chain runs to 286 residues: Probable aquaporin-3 (286 aa).

Residues 1–34 (MADTYGMNGHNGHVKDRRSSSMNGRNRLYAQQEP) are disordered. Residues 1–52 (MADTYGMNGHNGHVKDRRSSSMNGRNRLYAQQEPQRTTHLSEFGKHMVAASG) are Cytoplasmic-facing. The helical transmembrane segment at 53-73 (EFVGTFLFLYFGYAGNIVAVL) threads the bilayer. Over 74 to 87 (QEPISGPNGTLANN) the chain is Extracellular. N-linked (GlcNAc...) asparagine glycosylation is found at Asn-81 and Asn-86. The chain crosses the membrane as a helical span at residues 88 to 108 (TVMYIAMAYGFSLLVNVWTFY). The Cytoplasmic portion of the chain corresponds to 109–135 (RISGGLFNPAVTFGLCLSGQLPWIRAL). The NPA 1 motif lies at 116–118 (NPA). A helical transmembrane segment spans residues 136–156 (FLFPSQIIAAMCAGGLVNAMF). Residues 157-175 (PGSASIANTTLGPNTSIAQ) are Extracellular-facing. Asn-164 and Asn-170 each carry an N-linked (GlcNAc...) asparagine glycan. Residues 176–196 (GVFLEMFFTAQLVFVVLMLAA) form a helical membrane-spanning segment. Over 197 to 202 (EKSRDT) the chain is Cytoplasmic. A helical transmembrane segment spans residues 203 to 223 (FLAPVGIGLALFVALIPGVFV). The Extracellular segment spans residues 224–244 (TGGSANPVRSFGCAVGSRDFP). The NPA 2 motif lies at 229–231 (NPV). The helical transmembrane segment at 245–265 (GYHWIYWVGPLLGAALAAGYF) threads the bilayer. Residues 266–286 (RLVKMMHYEEANPGQDSPVDV) are Cytoplasmic-facing.

This sequence belongs to the MIP/aquaporin (TC 1.A.8) family.

The protein resides in the membrane. It carries out the reaction H2O(in) = H2O(out). Functionally, probable water channel that may have redundant functions with FgAQP5. This chain is Probable aquaporin-3, found in Gibberella zeae (strain ATCC MYA-4620 / CBS 123657 / FGSC 9075 / NRRL 31084 / PH-1) (Wheat head blight fungus).